A 20-amino-acid polypeptide reads, in one-letter code: Cytochrome c oxidase subunit 6A1, mitochondrial (20 aa).

Belongs to the cytochrome c oxidase subunit 6A family. In terms of assembly, component of the cytochrome c oxidase (complex IV, CIV), a multisubunit enzyme composed of 14 subunits. The complex is composed of a catalytic core of 3 subunits MT-CO1, MT-CO2 and MT-CO3, encoded in the mitochondrial DNA, and 11 supernumerary subunits COX4I, COX5A, COX5B, COX6A, COX6B, COX6C, COX7A, COX7B, COX7C, COX8 and NDUFA4, which are encoded in the nuclear genome. The complex exists as a monomer or a dimer and forms supercomplexes (SCs) in the inner mitochondrial membrane with NADH-ubiquinone oxidoreductase (complex I, CI) and ubiquinol-cytochrome c oxidoreductase (cytochrome b-c1 complex, complex III, CIII), resulting in different assemblies (supercomplex SCI(1)III(2)IV(1) and megacomplex MCI(2)III(2)IV(2)). In terms of tissue distribution, liver specific isoform.

Its subcellular location is the mitochondrion inner membrane. It functions in the pathway energy metabolism; oxidative phosphorylation. In terms of biological role, component of the cytochrome c oxidase, the last enzyme in the mitochondrial electron transport chain which drives oxidative phosphorylation. The respiratory chain contains 3 multisubunit complexes succinate dehydrogenase (complex II, CII), ubiquinol-cytochrome c oxidoreductase (cytochrome b-c1 complex, complex III, CIII) and cytochrome c oxidase (complex IV, CIV), that cooperate to transfer electrons derived from NADH and succinate to molecular oxygen, creating an electrochemical gradient over the inner membrane that drives transmembrane transport and the ATP synthase. Cytochrome c oxidase is the component of the respiratory chain that catalyzes the reduction of oxygen to water. Electrons originating from reduced cytochrome c in the intermembrane space (IMS) are transferred via the dinuclear copper A center (CU(A)) of subunit 2 and heme A of subunit 1 to the active site in subunit 1, a binuclear center (BNC) formed by heme A3 and copper B (CU(B)). The BNC reduces molecular oxygen to 2 water molecules unsing 4 electrons from cytochrome c in the IMS and 4 protons from the mitochondrial matrix. This is Cytochrome c oxidase subunit 6A1, mitochondrial (COX6A1) from Ovis aries (Sheep).